A 364-amino-acid polypeptide reads, in one-letter code: MLQRTPLFPLYAEYGAKTIDFGGWELPVQFSSIKEEHEAVRTRAGLFDVSHMGEFEVKGKDSVAFLQKMMTNDVAKLTDGRAQYTLMCYEDGGTVDDLLVYKKADDHYLLVVNAANIEKDFAWLSEHVVGDVELVNISNDIAQLALQGPLAEKVLQQLTTVDLSTMKFFAFADHVDVAGVQTLVSRTGYTGEDGFELYCRAEDAPTLWRAILEAGKEEGVLPCGLGARDTLRFEACLPLYGQELAKDITPIEAGLGFAVKTNKDVDFFGKEILKKQKEEGAPRRLVGIEMIDKGIARHGYAVYVNNEQIGFVTTGTQSPTLKKNIGLALISTAFSSLDTEVEVDVRGKRLKARVVATPFYKRTK.

This sequence belongs to the GcvT family. The glycine cleavage system is composed of four proteins: P, T, L and H.

It carries out the reaction N(6)-[(R)-S(8)-aminomethyldihydrolipoyl]-L-lysyl-[protein] + (6S)-5,6,7,8-tetrahydrofolate = N(6)-[(R)-dihydrolipoyl]-L-lysyl-[protein] + (6R)-5,10-methylene-5,6,7,8-tetrahydrofolate + NH4(+). The glycine cleavage system catalyzes the degradation of glycine. This chain is Aminomethyltransferase, found in Anoxybacillus flavithermus (strain DSM 21510 / WK1).